We begin with the raw amino-acid sequence, 599 residues long: Elongation factor 4 (599 aa).

The tr-type G domain maps to 5-187; the sequence is SHIRNFSIIA…RLVQSIPAPE (183 aa). GTP contacts are provided by residues 17 to 22 and 134 to 137; these read DHGKST and NKMD.

Belongs to the TRAFAC class translation factor GTPase superfamily. Classic translation factor GTPase family. LepA subfamily.

It is found in the cell inner membrane. It carries out the reaction GTP + H2O = GDP + phosphate + H(+). In terms of biological role, required for accurate and efficient protein synthesis under certain stress conditions. May act as a fidelity factor of the translation reaction, by catalyzing a one-codon backward translocation of tRNAs on improperly translocated ribosomes. Back-translocation proceeds from a post-translocation (POST) complex to a pre-translocation (PRE) complex, thus giving elongation factor G a second chance to translocate the tRNAs correctly. Binds to ribosomes in a GTP-dependent manner. This Pseudomonas entomophila (strain L48) protein is Elongation factor 4.